The primary structure comprises 131 residues: Small ribosomal subunit protein uS11 (131 aa).

Belongs to the universal ribosomal protein uS11 family. Part of the 30S ribosomal subunit. Interacts with proteins S7 and S18. Binds to IF-3.

Functionally, located on the platform of the 30S subunit, it bridges several disparate RNA helices of the 16S rRNA. Forms part of the Shine-Dalgarno cleft in the 70S ribosome. The protein is Small ribosomal subunit protein uS11 of Bacillus licheniformis (strain ATCC 14580 / DSM 13 / JCM 2505 / CCUG 7422 / NBRC 12200 / NCIMB 9375 / NCTC 10341 / NRRL NRS-1264 / Gibson 46).